The primary structure comprises 291 residues: D-alanyl-D-alanine carboxypeptidase DacB2 (291 aa).

An N-terminal signal peptide occupies residues 1-22 (MRKLMTATAALCACAVTVSAGA). Ser69 serves as the catalytic Acyl-ester intermediate. Lys72 (proton acceptor) is an active-site residue. Ser124 is an active-site residue.

Belongs to the peptidase S11 family.

It localises to the periplasm. The protein operates within cell wall biogenesis; peptidoglycan biosynthesis. With respect to regulation, inhibited by the beta-lactam antibiotic meropenem. Inhibited by the non-specific inhibitor phenylmethylsulfonyl fluoride (PMSF). Functionally, probably cleaves the terminal D-Ala-D-Ala dipeptide of the peptidoglycan stem peptide. Shows significant D,D-carboxypeptidase activity in vitro. Acts on the synthetic penta-peptide substrate Penta-DAP (L-Ala-gamma-D-Gln-DAP-D-Ala-D-Ala). Also shows weak activity on Penta-Lys (L-Ala-gamma-Glu-L-Lys-D-Ala-D-Ala). The catalytic domain binds weakly to peptidoglycan in vitro. Plays an important role in the maintenance of colony morphology and cell wall permeability and integrity. The protein is D-alanyl-D-alanine carboxypeptidase DacB2 of Mycobacterium tuberculosis (strain ATCC 25618 / H37Rv).